A 434-amino-acid polypeptide reads, in one-letter code: 3-phosphoshikimate 1-carboxyvinyltransferase (434 aa).

Residues Lys22, Ser23, and Arg27 each coordinate 3-phosphoshikimate. A phosphoenolpyruvate-binding site is contributed by Lys22. Residues Gly93 and Arg121 each contribute to the phosphoenolpyruvate site. The 3-phosphoshikimate site is built by Ser168, Ser169, Gln170, Ser199, Asp320, and Lys347. A phosphoenolpyruvate-binding site is contributed by Gln170. Residue Asp320 is the Proton acceptor of the active site. Residues Arg351, Arg394, and Lys419 each coordinate phosphoenolpyruvate.

This sequence belongs to the EPSP synthase family. As to quaternary structure, monomer.

It localises to the cytoplasm. The enzyme catalyses 3-phosphoshikimate + phosphoenolpyruvate = 5-O-(1-carboxyvinyl)-3-phosphoshikimate + phosphate. It functions in the pathway metabolic intermediate biosynthesis; chorismate biosynthesis; chorismate from D-erythrose 4-phosphate and phosphoenolpyruvate: step 6/7. Functionally, catalyzes the transfer of the enolpyruvyl moiety of phosphoenolpyruvate (PEP) to the 5-hydroxyl of shikimate-3-phosphate (S3P) to produce enolpyruvyl shikimate-3-phosphate and inorganic phosphate. The chain is 3-phosphoshikimate 1-carboxyvinyltransferase from Paraburkholderia phymatum (strain DSM 17167 / CIP 108236 / LMG 21445 / STM815) (Burkholderia phymatum).